A 331-amino-acid polypeptide reads, in one-letter code: Ketol-acid reductoisomerase (NADP(+)) (331 aa).

The 181-residue stretch at 2–182 (ARMYYDQDAN…GGTRAGILET (181 aa)) folds into the KARI N-terminal Rossmann domain. NADP(+) is bound by residues 25–28 (YGSQ), Ser51, Ser53, and 83–86 (DEVQ). Residue His108 is part of the active site. Gly134 contacts NADP(+). The KARI C-terminal knotted domain occupies 183–328 (TFREETETDL…KDLRAMFSWL (146 aa)). Positions 191, 195, 227, and 231 each coordinate Mg(2+). Residue Ser252 coordinates substrate.

It belongs to the ketol-acid reductoisomerase family. In terms of assembly, homooctamer. Mg(2+) serves as cofactor.

It carries out the reaction (2R)-2,3-dihydroxy-3-methylbutanoate + NADP(+) = (2S)-2-acetolactate + NADPH + H(+). The enzyme catalyses (2R,3R)-2,3-dihydroxy-3-methylpentanoate + NADP(+) = (S)-2-ethyl-2-hydroxy-3-oxobutanoate + NADPH + H(+). It participates in amino-acid biosynthesis; L-isoleucine biosynthesis; L-isoleucine from 2-oxobutanoate: step 2/4. The protein operates within amino-acid biosynthesis; L-valine biosynthesis; L-valine from pyruvate: step 2/4. Functionally, involved in the biosynthesis of branched-chain amino acids (BCAA). Catalyzes an alkyl-migration followed by a ketol-acid reduction of (S)-2-acetolactate (S2AL) to yield (R)-2,3-dihydroxy-isovalerate. In the isomerase reaction, S2AL is rearranged via a Mg-dependent methyl migration to produce 3-hydroxy-3-methyl-2-ketobutyrate (HMKB). In the reductase reaction, this 2-ketoacid undergoes a metal-dependent reduction by NADPH to yield (R)-2,3-dihydroxy-isovalerate. The polypeptide is Ketol-acid reductoisomerase (NADP(+)) (Synechocystis sp. (strain ATCC 27184 / PCC 6803 / Kazusa)).